The chain runs to 73 residues: Translation initiation factor IF-1 (73 aa).

Residues 1–73 (MGKKEEAFEV…TKGRIVYRER (73 aa)) enclose the S1-like domain.

It belongs to the IF-1 family. In terms of assembly, component of the 30S ribosomal translation pre-initiation complex which assembles on the 30S ribosome in the order IF-2 and IF-3, IF-1 and N-formylmethionyl-tRNA(fMet); mRNA recruitment can occur at any time during PIC assembly.

The protein localises to the cytoplasm. One of the essential components for the initiation of protein synthesis. Stabilizes the binding of IF-2 and IF-3 on the 30S subunit to which N-formylmethionyl-tRNA(fMet) subsequently binds. Helps modulate mRNA selection, yielding the 30S pre-initiation complex (PIC). Upon addition of the 50S ribosomal subunit IF-1, IF-2 and IF-3 are released leaving the mature 70S translation initiation complex. This is Translation initiation factor IF-1 from Rhodopirellula baltica (strain DSM 10527 / NCIMB 13988 / SH1).